The chain runs to 378 residues: Chaperone protein DnaJ (378 aa).

Residues 5-69 (EYYDRLGVSK…QKRAAYDQYG (65 aa)) enclose the J domain. Residues 134-216 (GVEKEVSYNR…CHGTGHEKQA (83 aa)) form a CR-type zinc finger. Positions 147, 150, 164, 167, 190, 193, 204, and 207 each coordinate Zn(2+). CXXCXGXG motif repeat units lie at residues 147 to 154 (CGTCLGSG), 164 to 171 (CRKCHGSG), 190 to 197 (CDICHGSG), and 204 to 211 (CQTCHGTG).

Belongs to the DnaJ family. Homodimer. Requires Zn(2+) as cofactor.

It localises to the cytoplasm. In terms of biological role, participates actively in the response to hyperosmotic and heat shock by preventing the aggregation of stress-denatured proteins and by disaggregating proteins, also in an autonomous, DnaK-independent fashion. Unfolded proteins bind initially to DnaJ; upon interaction with the DnaJ-bound protein, DnaK hydrolyzes its bound ATP, resulting in the formation of a stable complex. GrpE releases ADP from DnaK; ATP binding to DnaK triggers the release of the substrate protein, thus completing the reaction cycle. Several rounds of ATP-dependent interactions between DnaJ, DnaK and GrpE are required for fully efficient folding. Also involved, together with DnaK and GrpE, in the DNA replication of plasmids through activation of initiation proteins. The protein is Chaperone protein DnaJ of Streptococcus pyogenes.